The following is a 127-amino-acid chain: Small ribosomal subunit protein uS11 (127 aa).

This sequence belongs to the universal ribosomal protein uS11 family. Part of the 30S ribosomal subunit. Interacts with proteins S7 and S18. Binds to IF-3.

Functionally, located on the platform of the 30S subunit, it bridges several disparate RNA helices of the 16S rRNA. Forms part of the Shine-Dalgarno cleft in the 70S ribosome. The polypeptide is Small ribosomal subunit protein uS11 (Chlorobium chlorochromatii (strain CaD3)).